The following is a 617-amino-acid chain: Chaperone protein HscA homolog (617 aa).

Positions 1–23 (MALLQIAEPGQSSAPHEHKRAAG) are disordered.

This sequence belongs to the heat shock protein 70 family.

Functionally, chaperone involved in the maturation of iron-sulfur cluster-containing proteins. Has a low intrinsic ATPase activity which is markedly stimulated by HscB. The protein is Chaperone protein HscA homolog of Vibrio vulnificus (strain YJ016).